The following is a 425-amino-acid chain: Phosphoribosylamine--glycine ligase (425 aa).

One can recognise an ATP-grasp domain in the interval 109-315 (KALMQEAGIP…LEELILACVQ (207 aa)). 135–195 (IQAQGAPIVV…EECLTGQEVS (61 aa)) is a binding site for ATP. Positions 285 and 287 each coordinate Mg(2+).

It belongs to the GARS family. Requires Mg(2+) as cofactor. It depends on Mn(2+) as a cofactor.

The catalysed reaction is 5-phospho-beta-D-ribosylamine + glycine + ATP = N(1)-(5-phospho-beta-D-ribosyl)glycinamide + ADP + phosphate + H(+). Its pathway is purine metabolism; IMP biosynthesis via de novo pathway; N(1)-(5-phospho-D-ribosyl)glycinamide from 5-phospho-alpha-D-ribose 1-diphosphate: step 2/2. The sequence is that of Phosphoribosylamine--glycine ligase from Nostoc sp. (strain PCC 7120 / SAG 25.82 / UTEX 2576).